Consider the following 547-residue polypeptide: Chaperonin GroEL 2 (547 aa).

ATP is bound by residues 30–33 (TLGP), Lys-51, 87–91 (DGTTT), Gly-415, 479–481 (NAA), and Asp-495. Residues 528 to 547 (KPATAGLPHGGPGGFGGPEF) are disordered. Positions 535-547 (PHGGPGGFGGPEF) are enriched in gly residues.

The protein belongs to the chaperonin (HSP60) family. Forms a cylinder of 14 subunits composed of two heptameric rings stacked back-to-back. Interacts with the co-chaperonin GroES.

Its subcellular location is the cytoplasm. The enzyme catalyses ATP + H2O + a folded polypeptide = ADP + phosphate + an unfolded polypeptide.. Functionally, together with its co-chaperonin GroES, plays an essential role in assisting protein folding. The GroEL-GroES system forms a nano-cage that allows encapsulation of the non-native substrate proteins and provides a physical environment optimized to promote and accelerate protein folding. In Azoarcus sp. (strain BH72), this protein is Chaperonin GroEL 2.